The chain runs to 445 residues: Xylose isomerase (445 aa).

Active-site residues include His-99 and Asp-102. Positions 230, 266, 269, 294, 305, 307, and 337 each coordinate Mg(2+).

The protein belongs to the xylose isomerase family. Homotetramer. Requires Mg(2+) as cofactor.

It localises to the cytoplasm. It catalyses the reaction alpha-D-xylose = alpha-D-xylulofuranose. In Geobacillus thermodenitrificans (strain NG80-2), this protein is Xylose isomerase.